Reading from the N-terminus, the 134-residue chain is Large-conductance mechanosensitive channel (134 aa).

The next 2 membrane-spanning stretches (helical) occupy residues 16–36 (VIDLAVAVVIGAAFGKIVTAL) and 81–101 (GDFLNTILQFIIIAFAIFIIV).

It belongs to the MscL family. In terms of assembly, homopentamer.

The protein resides in the cell inner membrane. Channel that opens in response to stretch forces in the membrane lipid bilayer. May participate in the regulation of osmotic pressure changes within the cell. This is Large-conductance mechanosensitive channel from Xylella fastidiosa (strain 9a5c).